The sequence spans 257 residues: Transcription factor LBX2 (257 aa).

The interval 1–43 (MTSSSKDMKAGSVLQSSGEERRRGPLDQLPPPANSNKPLTPFS) is disordered. The segment at 1–46 (MTSSSKDMKAGSVLQSSGEERRRGPLDQLPPPANSNKPLTPFSIED) is required for convergent extension movement and hypaxial myogenesis during gastrulation. Required for the formation of thick and thin myofilaments. Required for myod1 expression in the pectoral fin bud. Required for continuous expression of cxcl12a in the posterior lateral mesoderm at the tail bud stage and in adaxial cells at the 10-somite stage. Residues 126–185 (RRKSRTAFTNHQIYELEKRFLYQKYLSPADRDQIAQQLGLTNAQVITWFQNRRAKLKRDL) constitute a DNA-binding region (homeobox). Residues 206 to 257 (LVSMEDMEDAHGGSGPISPSLSPRAFPQSPSSSRGQTTDEFSEEDEEIEVDD) are disordered. The segment covering 233–243 (QSPSSSRGQTT) has biased composition (polar residues). Residues 245–257 (EFSEEDEEIEVDD) show a composition bias toward acidic residues.

Interacts (via N-terminus) with tle3a/gro2 (via C-terminus).

Its subcellular location is the nucleus. Its function is as follows. Transcription factor required in several developmental processes. Involved in axis formation during embryonic development by inhibiting tle3a/gro2 from binding to tcf7l1a, thereby facilitating ctnnb1-mediated transcription of canonical Wnt/CTNNB1 signaling target genes. Regulates convergent extension movements and hypaxial myogenesis during gastrulation by activating non-canonical Wnt signaling via wnt5b. Required for the formation of myofibrils and fusion of fast muscle precursor cells, potentially via transcriptional regulation of genes specific to thick and thin myofilaments. Regulates the migration of the posterior lateral line primordium during embryonic development, possibly via regulation of cxcl12a/sdf1a expression in the posterior lateral mesoderm, thereby modulating the deposition of neuromasts at correct intervals. In Danio rerio (Zebrafish), this protein is Transcription factor LBX2.